We begin with the raw amino-acid sequence, 220 residues long: MKLNKYIDHTLLKQDATKAEIKQLCDEAIEFDFATVCVNSYWTSYCKELLKGTNVGITNVVGFPLGACTTATKAFEVSEAIKDGATEIDMVLNIGALKDKNYELVLEDMKAVKKAAGSHVVKCIMENCLLTKEEIMKACEIAVEAGLEFVKTSTGFSKSGATFEDVKLMKSVVKDNALVKAAGGVRTFEDAQKMIEAGADRLGTSGGVAIIKGEENNASY.

Catalysis depends on aspartate 89, which acts as the Proton donor/acceptor. Lysine 151 serves as the catalytic Schiff-base intermediate with acetaldehyde. The active-site Proton donor/acceptor is the lysine 180.

This sequence belongs to the DeoC/FbaB aldolase family. DeoC type 1 subfamily.

It localises to the cytoplasm. It carries out the reaction 2-deoxy-D-ribose 5-phosphate = D-glyceraldehyde 3-phosphate + acetaldehyde. The protein operates within carbohydrate degradation; 2-deoxy-D-ribose 1-phosphate degradation; D-glyceraldehyde 3-phosphate and acetaldehyde from 2-deoxy-alpha-D-ribose 1-phosphate: step 2/2. Functionally, catalyzes a reversible aldol reaction between acetaldehyde and D-glyceraldehyde 3-phosphate to generate 2-deoxy-D-ribose 5-phosphate. In Mesoplasma florum (strain ATCC 33453 / NBRC 100688 / NCTC 11704 / L1) (Acholeplasma florum), this protein is Deoxyribose-phosphate aldolase 1.